A 389-amino-acid polypeptide reads, in one-letter code: Probable acyl-CoA dehydrogenase fadE25 (389 aa).

It belongs to the acyl-CoA dehydrogenase family. It depends on FAD as a cofactor.

It catalyses the reaction a 2,3-saturated acyl-CoA + A = a 2,3-dehydroacyl-CoA + AH2. The polypeptide is Probable acyl-CoA dehydrogenase fadE25 (fadE25) (Mycobacterium leprae (strain TN)).